The chain runs to 308 residues: Putative hydrolase MT0526 (308 aa).

Residues 1-48 (MMVSSHLGSPDQAGHVDLASPADPPPPDASASHSPVDMPAPVAAAGSD) are disordered. Asp-62 serves as the catalytic Nucleophile. Asp-62, Asp-64, and Asp-237 together coordinate Mg(2+). The Proton donor role is filled by Asp-64.

The protein belongs to the HAD-like hydrolase superfamily. SerB family. Requires Mg(2+) as cofactor.

The sequence is that of Putative hydrolase MT0526 from Mycobacterium tuberculosis (strain CDC 1551 / Oshkosh).